Here is a 338-residue protein sequence, read N- to C-terminus: Glycerol-3-phosphate dehydrogenase [NAD(P)+] (338 aa).

The NADPH site is built by S14, Y15, H35, and K109. Sn-glycerol 3-phosphate is bound by residues K109, G138, and T140. Residue A142 participates in NADPH binding. K194, D247, S257, R258, and N259 together coordinate sn-glycerol 3-phosphate. The active-site Proton acceptor is K194. R258 contacts NADPH. The NADPH site is built by V282 and E284.

Belongs to the NAD-dependent glycerol-3-phosphate dehydrogenase family.

It is found in the cytoplasm. The catalysed reaction is sn-glycerol 3-phosphate + NAD(+) = dihydroxyacetone phosphate + NADH + H(+). It carries out the reaction sn-glycerol 3-phosphate + NADP(+) = dihydroxyacetone phosphate + NADPH + H(+). It functions in the pathway membrane lipid metabolism; glycerophospholipid metabolism. In terms of biological role, catalyzes the reduction of the glycolytic intermediate dihydroxyacetone phosphate (DHAP) to sn-glycerol 3-phosphate (G3P), the key precursor for phospholipid synthesis. This chain is Glycerol-3-phosphate dehydrogenase [NAD(P)+], found in Shewanella putrefaciens (strain CN-32 / ATCC BAA-453).